A 111-amino-acid chain; its full sequence is Photosystem II reaction center Psb28 protein (111 aa).

This sequence belongs to the Psb28 family. In terms of assembly, part of the photosystem II complex.

It is found in the cellular thylakoid membrane. In Acaryochloris marina (strain MBIC 11017), this protein is Photosystem II reaction center Psb28 protein.